A 219-amino-acid polypeptide reads, in one-letter code: Ribose-5-phosphate isomerase A (219 aa).

Residues 28–31 (TGST), 81–84 (DGAD), and 94–97 (KGGG) each bind substrate. Residue Glu103 is the Proton acceptor of the active site. Lys121 contributes to the substrate binding site.

The protein belongs to the ribose 5-phosphate isomerase family. As to quaternary structure, homodimer.

The enzyme catalyses aldehydo-D-ribose 5-phosphate = D-ribulose 5-phosphate. It functions in the pathway carbohydrate degradation; pentose phosphate pathway; D-ribose 5-phosphate from D-ribulose 5-phosphate (non-oxidative stage): step 1/1. In terms of biological role, catalyzes the reversible conversion of ribose-5-phosphate to ribulose 5-phosphate. The sequence is that of Ribose-5-phosphate isomerase A from Salmonella arizonae (strain ATCC BAA-731 / CDC346-86 / RSK2980).